The following is a 118-amino-acid chain: Small ribosomal subunit protein uS13 (118 aa).

The tract at residues 91–118 (HRRGLPVRGQRTKTNARTRKGPRKPIKK) is disordered.

This sequence belongs to the universal ribosomal protein uS13 family. In terms of assembly, part of the 30S ribosomal subunit. Forms a loose heterodimer with protein S19. Forms two bridges to the 50S subunit in the 70S ribosome.

Functionally, located at the top of the head of the 30S subunit, it contacts several helices of the 16S rRNA. In the 70S ribosome it contacts the 23S rRNA (bridge B1a) and protein L5 of the 50S subunit (bridge B1b), connecting the 2 subunits; these bridges are implicated in subunit movement. Contacts the tRNAs in the A and P-sites. The protein is Small ribosomal subunit protein uS13 of Pectobacterium atrosepticum (strain SCRI 1043 / ATCC BAA-672) (Erwinia carotovora subsp. atroseptica).